The chain runs to 390 residues: Leucine aminopeptidase 1 (390 aa).

The signal sequence occupies residues 1-18 (MKLSTALVLGATATGAWS). Positions 19–90 (YAIPQLEQEV…FPTLDAGSYV (72 aa)) are excised as a propeptide. Residue asparagine 120 is glycosylated (N-linked (GlcNAc...) asparagine). The Zn(2+) site is built by histidine 190, aspartate 209, glutamate 248, and aspartate 275. An intrachain disulfide couples cysteine 324 to cysteine 328. Residue histidine 357 participates in Zn(2+) binding.

This sequence belongs to the peptidase M28 family. M28E subfamily. Monomer. Zn(2+) serves as cofactor.

It is found in the secreted. Its function is as follows. Extracellular aminopeptidase that allows assimilation of proteinaceous substrates. The protein is Leucine aminopeptidase 1 (lap1) of Emericella nidulans (strain FGSC A4 / ATCC 38163 / CBS 112.46 / NRRL 194 / M139) (Aspergillus nidulans).